A 572-amino-acid chain; its full sequence is Mitochondrial distribution and morphology protein 34 (572 aa).

In terms of domain architecture, SMP-LTD spans 1–195; the sequence is MAFNFNWSPL…LPAIIHRLSL (195 aa). 3 disordered regions span residues 210–239, 330–423, and 455–482; these read TQAE…VDAL, SASI…PLSP, and RDMG…TPRA. Residues 330–347 show a composition bias toward polar residues; it reads SASIASMQTRSSTPSHTF. A compositionally biased stretch (basic residues) spans 358-370; it reads RHSKAHSRKRKKR. Over residues 371 to 381 the composition is skewed to basic and acidic residues; the sequence is VVDLRRPKTTD. Composition is skewed to polar residues over residues 387 to 400 and 460 to 480; these read SDES…SAPS and PSST…SATP.

This sequence belongs to the MDM34 family. In terms of assembly, component of the ER-mitochondria encounter structure (ERMES) or MDM complex, composed of mmm1, mdm10, mdm12 and mdm34.

The protein resides in the mitochondrion outer membrane. In terms of biological role, component of the ERMES/MDM complex, which serves as a molecular tether to connect the endoplasmic reticulum (ER) and mitochondria. Components of this complex are involved in the control of mitochondrial shape and protein biogenesis, and function in nonvesicular lipid trafficking between the ER and mitochondria. Mdm34 is required for the interaction of the ER-resident membrane protein mmm1 and the outer mitochondrial membrane-resident beta-barrel protein mdm10. The chain is Mitochondrial distribution and morphology protein 34 from Aspergillus clavatus (strain ATCC 1007 / CBS 513.65 / DSM 816 / NCTC 3887 / NRRL 1 / QM 1276 / 107).